Reading from the N-terminus, the 585-residue chain is Membrane protein insertase YidC (585 aa).

6 helical membrane-spanning segments follow: residues 5 to 25 (SVTG…FMSP), 338 to 358 (FGWD…AFTW), 362 to 382 (FVSN…LVTY), 432 to 452 (LGGC…FYVF), 482 to 502 (IPMY…TVFL), and 518 to 538 (IMLY…PSGL).

This sequence belongs to the OXA1/ALB3/YidC family. Type 1 subfamily. As to quaternary structure, interacts with the Sec translocase complex via SecD. Specifically interacts with transmembrane segments of nascent integral membrane proteins during membrane integration.

The protein resides in the cell inner membrane. Required for the insertion and/or proper folding and/or complex formation of integral membrane proteins into the membrane. Involved in integration of membrane proteins that insert both dependently and independently of the Sec translocase complex, as well as at least some lipoproteins. Aids folding of multispanning membrane proteins. The chain is Membrane protein insertase YidC from Chlorobium luteolum (strain DSM 273 / BCRC 81028 / 2530) (Pelodictyon luteolum).